The sequence spans 940 residues: Isoleucine--tRNA ligase (940 aa).

The 'HIGH' region signature appears at 58 to 68 (PYANGSIHIGH). L-isoleucyl-5'-AMP is bound at residue E564. The 'KMSKS' region motif lies at 605–609 (KMSKS). K608 contacts ATP. Residues C903, C906, C923, and C926 each coordinate Zn(2+).

The protein belongs to the class-I aminoacyl-tRNA synthetase family. IleS type 1 subfamily. Monomer. The cofactor is Zn(2+).

Its subcellular location is the cytoplasm. It catalyses the reaction tRNA(Ile) + L-isoleucine + ATP = L-isoleucyl-tRNA(Ile) + AMP + diphosphate. Catalyzes the attachment of isoleucine to tRNA(Ile). As IleRS can inadvertently accommodate and process structurally similar amino acids such as valine, to avoid such errors it has two additional distinct tRNA(Ile)-dependent editing activities. One activity is designated as 'pretransfer' editing and involves the hydrolysis of activated Val-AMP. The other activity is designated 'posttransfer' editing and involves deacylation of mischarged Val-tRNA(Ile). This Shewanella woodyi (strain ATCC 51908 / MS32) protein is Isoleucine--tRNA ligase.